Reading from the N-terminus, the 316-residue chain is C1GALT1-specific chaperone 1 (316 aa).

Residues 1 to 6 are Cytoplasmic-facing; it reads MLSESS. The chain crosses the membrane as a helical; Signal-anchor for type II membrane protein span at residues 7 to 26; the sequence is SFLKGVMLGSIFCALITMLG. Topologically, residues 27–316 are lumenal; it reads HIRIGNRMHH…FLPPNGSEND (290 aa).

This sequence belongs to the glycosyltransferase 31 family. Beta3-Gal-T subfamily. In terms of assembly, associates with core 1 beta-3-galactosyltransferase (C1GALT1), probably not with the soluble active form.

It localises to the membrane. In terms of biological role, probable chaperone required for the generation of 1 O-glycan Gal-beta1-3GalNAc-alpha1-Ser/Thr (T antigen), which is a precursor for many extended O-glycans in glycoproteins. Probably acts as a specific molecular chaperone assisting the folding/stability of core 1 beta-3-galactosyltransferase (C1GALT1). This is C1GALT1-specific chaperone 1 (C1galt1c1) from Rattus norvegicus (Rat).